The sequence spans 167 residues: Small ribosomal subunit protein uS5 (167 aa).

Residues 12-75 (LQEKLVQVNR…DAARKNMITV (64 aa)) enclose the S5 DRBM domain.

This sequence belongs to the universal ribosomal protein uS5 family. As to quaternary structure, part of the 30S ribosomal subunit. Contacts proteins S4 and S8.

In terms of biological role, with S4 and S12 plays an important role in translational accuracy. Located at the back of the 30S subunit body where it stabilizes the conformation of the head with respect to the body. This is Small ribosomal subunit protein uS5 from Hahella chejuensis (strain KCTC 2396).